A 132-amino-acid chain; its full sequence is uncharacterized protein (132 aa).

A signal peptide spans 1-25; it reads MRFTKVVGFLSVLGLAAVFPLTAQA.

This is an uncharacterized protein from Bacillus subtilis (strain 168).